The following is a 395-amino-acid chain: Inner membrane protein YjgN (395 aa).

Residues 1–24 (MNNVISSKDNHNHTLVFTGKGGKY) lie on the Cytoplasmic side of the membrane. Residues 25–45 (FVICLVNFLLTCITLGIYAPW) traverse the membrane as a helical segment. The Periplasmic portion of the chain corresponds to 46–71 (AMVKCRRYIYTNMTLNNQPFAYKATG). A helical transmembrane segment spans residues 72–92 (GALFISVLLVFIIYIVSLSLI). Residues 93–95 (EHG) lie on the Cytoplasmic side of the membrane. Residues 96-116 (HPGLGFTLFGLLIAIIPFMAV) traverse the membrane as a helical segment. The Periplasmic segment spans residues 117–146 (KGLQYQAMMTSLNGVHFGFQCSMRRAWWYM). The helical transmembrane segment at 147 to 167 (FALPVLLMVALYIVLYIISLV) threads the bilayer. A topological domain (cytoplasmic) is located at residue threonine 168. A helical transmembrane segment spans residues 169 to 189 (IAVGGLVFSIVFLGLLAIIGI). The Periplasmic portion of the chain corresponds to 190–229 (GVINGITYSKWMTLFGNGANFGIHRFSIQVNVKTCIRGCV). A helical transmembrane segment spans residues 230–250 (LAMLTLFPFAVVIGYLIAPVF). The Cytoplasmic segment spans residues 251 to 275 (TDMILLSMMGNAQAGGALILQYYGQ). The helical transmembrane segment at 276–296 (IMACYFLYFLAIIVVTSYLYV) threads the bilayer. Residues 297-327 (ALRNLFLNNLSLANDSIRFHSSVTAHGMLWR) are Periplasmic-facing. Residues 328–348 (LLVVFVISGVTLGLAYPWLKI) form a helical membrane-spanning segment. Residues 349-395 (WLVSWLAQNTQVQGDLDSLELTNDEKPLENSPLMWISRGIMPYFPFI) are Cytoplasmic-facing.

It localises to the cell inner membrane. This Salmonella typhimurium (strain LT2 / SGSC1412 / ATCC 700720) protein is Inner membrane protein YjgN (yjgN).